Reading from the N-terminus, the 347-residue chain is Protein RecA (347 aa).

Residue 64 to 71 participates in ATP binding; the sequence is GPESSGKT.

It belongs to the RecA family.

The protein resides in the cytoplasm. Can catalyze the hydrolysis of ATP in the presence of single-stranded DNA, the ATP-dependent uptake of single-stranded DNA by duplex DNA, and the ATP-dependent hybridization of homologous single-stranded DNAs. It interacts with LexA causing its activation and leading to its autocatalytic cleavage. The chain is Protein RecA from Bartonella bacilliformis (strain ATCC 35685 / KC583 / Herrer 020/F12,63).